A 304-amino-acid chain; its full sequence is Tyrosine recombinase XerD (304 aa).

Residues 1-92 (MKARVLAKTW…VARGLHKFAL (92 aa)) enclose the Core-binding (CB) domain. In terms of domain architecture, Tyr recombinase spans 113-298 (HLPDTLSINE…TADSLREVWR (186 aa)). Active-site residues include Arg156, Lys180, His250, Arg253, and His276. Tyr285 (O-(3'-phospho-DNA)-tyrosine intermediate) is an active-site residue.

The protein belongs to the 'phage' integrase family. XerD subfamily. Forms a cyclic heterotetrameric complex composed of two molecules of XerC and two molecules of XerD.

Its subcellular location is the cytoplasm. In terms of biological role, site-specific tyrosine recombinase, which acts by catalyzing the cutting and rejoining of the recombining DNA molecules. The XerC-XerD complex is essential to convert dimers of the bacterial chromosome into monomers to permit their segregation at cell division. It also contributes to the segregational stability of plasmids. This chain is Tyrosine recombinase XerD, found in Corynebacterium glutamicum (strain ATCC 13032 / DSM 20300 / JCM 1318 / BCRC 11384 / CCUG 27702 / LMG 3730 / NBRC 12168 / NCIMB 10025 / NRRL B-2784 / 534).